Consider the following 123-residue polypeptide: Urotensin-2 (123 aa).

A signal peptide spans 1 to 20; that stretch reads MDRVPFCCLLFVGLLNPLLS. Residues 21 to 104 constitute a propeptide that is removed on maturation; sequence FPVTDTGEMS…TVLSRLLART (84 aa). A disordered region spans residues 63-91; it reads EAEGSLGQADPSAETPTPRGSLRKALTGQ. A disulfide bond links cysteine 117 and cysteine 122.

It belongs to the urotensin-2 family. Brain specific.

It localises to the secreted. Functionally, highly potent vasoconstrictor. The polypeptide is Urotensin-2 (Uts2) (Rattus norvegicus (Rat)).